The following is a 325-amino-acid chain: Diadenosine 5',5'''-P1,P4-tetraphosphate phosphorylase 2 (325 aa).

Substrate-binding positions include lysine 53, 92–93, asparagine 148, and 154–157; these read NK and GSSQ. Histidine 161 serves as the catalytic Nucleophile. Residues glutamine 163, 277 to 279, methionine 284, and lysine 288 each bind substrate; that span reads NST.

This sequence belongs to the ATP adenylyltransferase family. Monomer. The cofactor is a divalent metal cation.

The protein resides in the cytoplasm. Its subcellular location is the nucleus. The enzyme catalyses ADP + ATP + H(+) = P(1),P(4)-bis(5'-adenosyl) tetraphosphate + phosphate. The catalysed reaction is sulfate + ADP + H(+) = adenosine 5'-phosphosulfate + phosphate. Its function is as follows. Ap4A phosphorylase catalyzes the phosphorolytic degradation of bis(5'-adenosyl) tetraphosphate (Ap4A) into ADP and ATP. Can also use other Np4N' nucleotides (where N and N' stand for A,C,G or U) as substrates, but prefers A-containing substrates. Cannot catalyze the reverse reaction. Additionally, this enzyme can also catalyze the phosphorolytic degradation of adenosine 5'-phosphosulfate (AMPS) into ADP and sulfate, the reversible exchange reaction between inorganic phosphate and the beta-phosphate of a nucleoside diphosphate (NDP), and the synthesis of Ap4A from AMPS plus ATP. In Saccharomyces cerevisiae (strain ATCC 204508 / S288c) (Baker's yeast), this protein is Diadenosine 5',5'''-P1,P4-tetraphosphate phosphorylase 2.